The following is a 1553-amino-acid chain: Pre-mRNA cleavage complex 2 protein Pcf11 (1553 aa).

S2 carries the N-acetylserine modification. Residues 14-142 (AREDACRDYQ…ALDVRVNSLD (129 aa)) form the CID domain. S120 carries the phosphoserine modification. Residue T121 is modified to Phosphothreonine. Residues 167–186 (NKSPDEPSTPGTVVSSPSIS) are disordered. A phosphoserine mark is found at S169 and S182. The segment covering 174 to 186 (STPGTVVSSPSIS) has biased composition (low complexity). Residues 208–235 (LLAKQKQLLELQQKKLELELEQAKAQLA) adopt a coiled-coil conformation. Positions 265 to 648 (AVKTPHQVPV…KQQHRLSVDA (384 aa)) are disordered. Residue K291 forms a Glycyl lysine isopeptide (Lys-Gly) (interchain with G-Cter in SUMO2) linkage. Residues 308–318 (HGKEQSHRKEF) are compositionally biased toward basic and acidic residues. Positions 321-342 (NTINQSDIKTSKNVPSEKLNSS) are enriched in polar residues. A Glycyl lysine isopeptide (Lys-Gly) (interchain with G-Cter in SUMO2) cross-link involves residue K329. 3 stretches are compositionally biased toward basic and acidic residues: residues 343 to 365 (KQEK…DSKS), 381 to 422 (HTKD…DVKE), and 428 to 443 (EKKE…EHRV). K457 participates in a covalent cross-link: Glycyl lysine isopeptide (Lys-Gly) (interchain with G-Cter in SUMO2). Residues 476–487 (STRKRSRSRSPK) are compositionally biased toward basic residues. Residues S490, S495, S510, and S512 each carry the phosphoserine modification. Residues 495 to 509 (SPKRRDRRSPKRRQR) show a composition bias toward basic residues. Composition is skewed to basic and acidic residues over residues 530-568 (SHME…DRPQ) and 600-616 (SGWE…EHSK). Residue S645 is modified to Phosphoserine. K654 is covalently cross-linked (Glycyl lysine isopeptide (Lys-Gly) (interchain with G-Cter in SUMO2)). At S705 the chain carries Phosphoserine. Positions 707–733 (FNDRFPLKRPRYEDSDKPFVDGPASRF) are disordered. The span at 716-725 (PRYEDSDKPF) shows a compositional bias: basic and acidic residues. Residue K723 forms a Glycyl lysine isopeptide (Lys-Gly) (interchain with G-Cter in SUMO2) linkage. Phosphoserine is present on S777. T785 is modified (phosphothreonine). S794 carries the phosphoserine modification. An asymmetric dimethylarginine mark is found at R805, R820, and R833. Residue S851 is modified to Phosphoserine. A disordered region spans residues 921–940 (HGPSGAAIRFDGPHGQPGGG). Residues R929, R944, R957, R982, R995, R1008, R1092, and R1103 each carry the asymmetric dimethylarginine modification. Residue K1276 forms a Glycyl lysine isopeptide (Lys-Gly) (interchain with G-Cter in SUMO2) linkage. Positions 1286 to 1313 (DSATAQVTEAVAQPPPEEDEDQNEDQDV) are disordered. The segment covering 1301 to 1313 (PEEDEDQNEDQDV) has biased composition (acidic residues). Glycyl lysine isopeptide (Lys-Gly) (interchain with G-Cter in SUMO2) cross-links involve residues K1417, K1509, K1522, and K1544. The tract at residues 1516 to 1553 (CESPKVKEEQIDAPPACSEESVATPTEIKTESDTVESV) is disordered.

Associates with the phosphorylated CTD domain of POLR2A /RNA polymerase II. Phosphorylation at Ser-120 and/or Thr-121 by WNK1 weakens its association with POLR2A/RNA polymerase II, promoting transcript release from the chromatin template and mRNA export to the cytoplasm.

The protein localises to the nucleus. Component of pre-mRNA cleavage complex II, which promotes transcription termination by RNA polymerase II. This is Pre-mRNA cleavage complex 2 protein Pcf11 from Mus musculus (Mouse).